We begin with the raw amino-acid sequence, 318 residues long: Methionyl-tRNA formyltransferase (318 aa).

112–115 (SLLP) is a binding site for (6S)-5,6,7,8-tetrahydrofolate.

This sequence belongs to the Fmt family.

The catalysed reaction is L-methionyl-tRNA(fMet) + (6R)-10-formyltetrahydrofolate = N-formyl-L-methionyl-tRNA(fMet) + (6S)-5,6,7,8-tetrahydrofolate + H(+). In terms of biological role, attaches a formyl group to the free amino group of methionyl-tRNA(fMet). The formyl group appears to play a dual role in the initiator identity of N-formylmethionyl-tRNA by promoting its recognition by IF2 and preventing the misappropriation of this tRNA by the elongation apparatus. The sequence is that of Methionyl-tRNA formyltransferase from Citrifermentans bemidjiense (strain ATCC BAA-1014 / DSM 16622 / JCM 12645 / Bem) (Geobacter bemidjiensis).